The sequence spans 64 residues: Long neurotoxin MS4 (64 aa).

Disulfide bonds link cysteine 3–cysteine 24, cysteine 6–cysteine 11, cysteine 17–cysteine 41, cysteine 45–cysteine 57, and cysteine 58–cysteine 63.

Belongs to the three-finger toxin family. Ancestral subfamily. As to expression, expressed by the venom gland.

The protein localises to the secreted. In terms of biological role, produces peripheral paralysis by blocking neuromuscular transmission at the postsynaptic site. Weak inhibitor of the endogenous nicotinic acetylcholine receptors (nAChR) in the human rhabdomyosarcoma TE 671 cell line with an IC(50) of 690 mM. This neurotoxin is lethal to zebrafish by injection at the back of the dorsolateral region, but is not toxic to mice by intraperitoneal injection. This chain is Long neurotoxin MS4, found in Micrurus surinamensis (Surinam coral snake).